Consider the following 198-residue polypeptide: Recombination protein RecR (198 aa).

Residues 57–72 (CSICGNLTDDDPCHIC) form a C4-type zinc finger. The Toprim domain maps to 80 to 175 (TTILVVEDAK…KVTRLARGLA (96 aa)).

It belongs to the RecR family.

In terms of biological role, may play a role in DNA repair. It seems to be involved in an RecBC-independent recombinational process of DNA repair. It may act with RecF and RecO. The sequence is that of Recombination protein RecR from Streptococcus pyogenes serotype M1.